Reading from the N-terminus, the 85-residue chain is Colicin E3 immunity protein (85 aa).

Belongs to the cloacin immunity protein family. As to quaternary structure, native colicin E3 is a 1:1 complex of A chain and protein B (Im3). Binds between the translocation and cytotoxic RNase domains of intact ColE3, blocking access to the 16S rRNA substrate. Forms a very tight 1:1 complex with the cytotoxic fragment (residues 456-551) of ColE3 (ceaC).

In terms of biological role, the cognate immunity protein for colicin E3 (ColE3), protects cells which harbor the plasmid ColE3 against the toxic action of ColE3. This protein inhibits the 16S RNA hydrolyzing activity of ColE3 by binding with very high affinity to the C-terminal catalytic domain of ColE3. This Escherichia coli protein is Colicin E3 immunity protein.